The chain runs to 236 residues: UPF0173 metal-dependent hydrolase AZC_2841 (236 aa).

The protein belongs to the UPF0173 family.

The sequence is that of UPF0173 metal-dependent hydrolase AZC_2841 from Azorhizobium caulinodans (strain ATCC 43989 / DSM 5975 / JCM 20966 / LMG 6465 / NBRC 14845 / NCIMB 13405 / ORS 571).